We begin with the raw amino-acid sequence, 559 residues long: Potassium-transporting ATPase potassium-binding subunit (559 aa).

The next 13 membrane-spanning stretches (helical) occupy residues 5 to 25 (GFLLIASFLLILLVLAKPLGS), 27 to 47 (LARLIAAVPLPGVAGIERILW), 63 to 83 (LLALLTLNLLGLGILFCLLFW), 132 to 152 (GLTVQNFLSAATGIAVVFALI), 170 to 190 (LVRITLWILFPVALIIALFFI), 253 to 273 (LAQMLAIFLIPAALCFAFGEA), 283 to 303 (LLWAMSFIFVVCVAVVMWAEV), 327 to 347 (FGVLASSLFAVVTTAASCGAV), 356 to 376 (ALGGMVPMWLMQIGEVVFGGV), 379 to 399 (GLYGMLLFVLLAVFIAGLMIG), 416 to 436 (MTALAILVTPMLVLLGSALAM), 484 to 504 (LLAFCMFVGRFGVIIPVMAIA), and 524 to 544 (GALFIGLLIGTVLLVGALTFI).

The protein belongs to the KdpA family. In terms of assembly, the system is composed of three essential subunits: KdpA, KdpB and KdpC.

The protein resides in the cell inner membrane. In terms of biological role, part of the high-affinity ATP-driven potassium transport (or Kdp) system, which catalyzes the hydrolysis of ATP coupled with the electrogenic transport of potassium into the cytoplasm. This subunit binds the periplasmic potassium ions and delivers the ions to the membrane domain of KdpB through an intramembrane tunnel. This Salmonella typhimurium (strain LT2 / SGSC1412 / ATCC 700720) protein is Potassium-transporting ATPase potassium-binding subunit.